Here is a 105-residue protein sequence, read N- to C-terminus: Small ribosomal subunit protein uS10 (105 aa).

The protein belongs to the universal ribosomal protein uS10 family. In terms of assembly, part of the 30S ribosomal subunit.

Its function is as follows. Involved in the binding of tRNA to the ribosomes. In Legionella pneumophila (strain Paris), this protein is Small ribosomal subunit protein uS10.